Here is a 645-residue protein sequence, read N- to C-terminus: Cytochrome c oxidase subunit 1 (645 aa).

Residues 8–28 (LNYFYFSMWTGLSGAALATMI) form a helical membrane-spanning segment. Residues glutamate 31 and glycine 36 each contribute to the Ca(2+) site. Histidine 54 provides a ligand contact to Fe(II)-heme a. The next 8 helical transmembrane spans lie at 56–76 (LIMV…NFLI), 90–110 (LNSI…KIAF), 247–267 (VLSV…LTLI), 282–302 (VLIP…AIVT), 337–357 (LFWF…FGVA), 376–396 (IWAV…HMYL), 410–430 (ITIM…LTLA), and 438–458 (LVFL…FTGM). Position 343 (histidine 343) interacts with Cu cation. The segment at residues 343-347 (HPEVY) is a cross-link (1'-histidyl-3'-tyrosine (His-Tyr)). Tyrosine 347 serves as a coordination point for O2. Cu cation is bound by residues histidine 392 and histidine 393. Residues histidine 470 and aspartate 471 each coordinate Mg(2+). The next 3 membrane-spanning stretches (helical) occupy residues 475–495 (VVAH…FTGL), 513–533 (FLHL…MFFL), and 555–575 (LASC…FGIF). Histidine 478 is a binding site for heme a3. Histidine 480 serves as a coordination point for Fe(II)-heme a.

Belongs to the heme-copper respiratory oxidase family. Component of the cytochrome c oxidase (complex IV, CIV), a multisubunit enzyme composed of a catalytic core of 3 subunits and several supernumerary subunits. The complex exists as a monomer or a dimer and forms supercomplexes (SCs) in the inner mitochondrial membrane with ubiquinol-cytochrome c oxidoreductase (cytochrome b-c1 complex, complex III, CIII). The cofactor is heme. Cu cation serves as cofactor.

The protein localises to the mitochondrion inner membrane. The enzyme catalyses 4 Fe(II)-[cytochrome c] + O2 + 8 H(+)(in) = 4 Fe(III)-[cytochrome c] + 2 H2O + 4 H(+)(out). Its pathway is energy metabolism; oxidative phosphorylation. In terms of biological role, component of the cytochrome c oxidase, the last enzyme in the mitochondrial electron transport chain which drives oxidative phosphorylation. The respiratory chain contains 3 multisubunit complexes succinate dehydrogenase (complex II, CII), ubiquinol-cytochrome c oxidoreductase (cytochrome b-c1 complex, complex III, CIII) and cytochrome c oxidase (complex IV, CIV), that cooperate to transfer electrons derived from NADH and succinate to molecular oxygen, creating an electrochemical gradient over the inner membrane that drives transmembrane transport and the ATP synthase. Cytochrome c oxidase is the component of the respiratory chain that catalyzes the reduction of oxygen to water. Electrons originating from reduced cytochrome c in the intermembrane space (IMS) are transferred via the dinuclear copper A center (CU(A)) of subunit 2 and heme A of subunit 1 to the active site in subunit 1, a binuclear center (BNC) formed by heme A3 and copper B (CU(B)). The BNC reduces molecular oxygen to 2 water molecules using 4 electrons from cytochrome c in the IMS and 4 protons from the mitochondrial matrix. In Paramecium tetraurelia, this protein is Cytochrome c oxidase subunit 1 (COI).